A 524-amino-acid chain; its full sequence is Peptide chain release factor 3 (524 aa).

One can recognise a tr-type G domain in the interval 11 to 278; it reads AKRRTFAIIS…SFVQYAPEPG (268 aa). GTP-binding positions include 20-27, 88-92, and 142-145; these read SHPDAGKT, DTPGH, and NKLD.

This sequence belongs to the TRAFAC class translation factor GTPase superfamily. Classic translation factor GTPase family. PrfC subfamily.

Its subcellular location is the cytoplasm. In terms of biological role, increases the formation of ribosomal termination complexes and stimulates activities of RF-1 and RF-2. It binds guanine nucleotides and has strong preference for UGA stop codons. It may interact directly with the ribosome. The stimulation of RF-1 and RF-2 is significantly reduced by GTP and GDP, but not by GMP. The sequence is that of Peptide chain release factor 3 from Lacticaseibacillus casei (strain BL23) (Lactobacillus casei).